Consider the following 422-residue polypeptide: O-methyltransferase kk1A (422 aa).

An S-adenosyl-L-methionine-binding site is contributed by Asp-277. The active-site Proton acceptor is the His-320.

This sequence belongs to the class I-like SAM-binding methyltransferase superfamily. Cation-independent O-methyltransferase family.

It functions in the pathway secondary metabolite biosynthesis. Functionally, O-methyltransferase; part of the gene cluster that mediates the biosynthesis of KK-1, a novel cyclic depsipeptide with 10 residues which is a promising active compound with high activity against many plant pathogens, especially Botrytis cinerea. Within the pathway, kk1A is responsible for the O-methylation of tyrosine as a free amino acid before its activation as an aminoacyl-AMP by the corresponding A domain of kk1B. The nonribosomal peptide synthetase (NRPS) kk1B catalyzes the elongation and cyclization of the decapeptide chain composed of 1 D-lactic acid residue (D-Lac), 1 pipecolic acid residue (Pip), 1 aspartic acid residue (Asp), 1 isoleucine residue (Ile), 1 glycine residue (Gly), 1 tyrosine residue (Tyr) and 4 valine residues (Val). The Asp, Ile and 3 Val residues are N-methylated by the 5 methyltransferase domains from the NRPS (found in modules 3, 5, 6, 7 and 9), whereas the Tyr residue is O-methylated by the cluster encoded O-methyltransferase kk1A. The thioesterase kk1J is likely to be involved in the corrective mechanism of peptide chain synthesis. The D-lactate dehydrogenase kk1H is involved in the synthesis of D-lactic acid from pyruvic acid, which is recognized by the A domain of the first kk1B module. The pyrroline-5-carboxylate reductase kk1I is involved in the synthesis of the L-pipecolic acid residue of KK-1 from delta-1-pyrroline-5-carboxylate (P5C), a metabolic intermediate of lysine. It is still unclear how kk1C and kk1D are involved in the production of KK-1. This Curvularia clavata protein is O-methyltransferase kk1A.